The sequence spans 978 residues: Calsyntenin-1 (978 aa).

The first 26 residues, 1-26 (MTFHKTFGYGCIVLICFELLFAGVET), serve as a signal peptide directing secretion. Residues 27–876 (SSENDDEYLT…SFIHKAEGSH (850 aa)) are Extracellular-facing. Cadherin domains are found at residues 37 to 143 (QKEI…APTF) and 144 to 249 (LEPS…MPER). Residue asparagine 53 is glycosylated (N-linked (GlcNAc...) asparagine). 4 N-linked (GlcNAc...) asparagine glycosylation sites follow: asparagine 304, asparagine 486, asparagine 608, and asparagine 823. Residues 877 to 897 (VTMLIILVSVFLAVLLCGVSI) traverse the membrane as a helical segment. Over 898 to 978 (ARLKNNQKYI…EWDNSNIFQQ (81 aa)) the chain is Cytoplasmic. Residues 937 to 958 (ADVTSDASSESENSESEDEEAL) are disordered. A compositionally biased stretch (acidic residues) spans 948–957 (ENSESEDEEA).

The protein belongs to the calsyntenin family.

The protein localises to the postsynaptic cell membrane. Its function is as follows. Postsynaptic adhesion molecule that binds to presynaptic neurexins to mediate both excitatory and inhibitory synapse formation. Promotes synapse development by acting as a cell adhesion molecule at the postsynaptic membrane, which associates with neurexin-alpha at the presynaptic membrane. The polypeptide is Calsyntenin-1 (Cals) (Drosophila melanogaster (Fruit fly)).